A 174-amino-acid polypeptide reads, in one-letter code: Photosystem I assembly protein Ycf4 (174 aa).

Transmembrane regions (helical) follow at residues 11–31 (LSNI…FLNG) and 56–76 (IILM…CLTI).

This sequence belongs to the Ycf4 family.

The protein localises to the plastid. It is found in the chloroplast thylakoid membrane. Its function is as follows. Seems to be required for the assembly of the photosystem I complex. The protein is Photosystem I assembly protein Ycf4 of Emiliania huxleyi (Coccolithophore).